A 349-amino-acid chain; its full sequence is Dihydroorotase (349 aa).

Positions 17 and 19 each coordinate Zn(2+). Residues 19 to 21 and Asn-45 each bind substrate; that span reads HLR. Zn(2+) is bound by residues Lys-103, His-140, and His-178. Lys-103 is modified (N6-carboxylysine). His-140 is a substrate binding site. Position 224 (Leu-224) interacts with substrate. Asp-252 lines the Zn(2+) pocket. Residue Asp-252 is part of the active site. His-256 and Ala-268 together coordinate substrate.

This sequence belongs to the metallo-dependent hydrolases superfamily. DHOase family. Class II DHOase subfamily. In terms of assembly, homodimer. Zn(2+) serves as cofactor.

It carries out the reaction (S)-dihydroorotate + H2O = N-carbamoyl-L-aspartate + H(+). The protein operates within pyrimidine metabolism; UMP biosynthesis via de novo pathway; (S)-dihydroorotate from bicarbonate: step 3/3. In terms of biological role, catalyzes the reversible cyclization of carbamoyl aspartate to dihydroorotate. The protein is Dihydroorotase of Buchnera aphidicola subsp. Schizaphis graminum (strain Sg).